The chain runs to 523 residues: UDP-glucuronosyltransferase 2B16 (523 aa).

An N-terminal signal peptide occupies residues 1-16; sequence LLLLLQLSCCFSSGSC. Lysine 129 is modified (N6-succinyllysine). Residue asparagine 309 is glycosylated (N-linked (GlcNAc...) asparagine). Residues 487 to 503 form a helical membrane-spanning segment; that stretch reads VIGFLLACLTITTYLVI.

Belongs to the UDP-glycosyltransferase family.

It localises to the microsome membrane. It is found in the endoplasmic reticulum membrane. The catalysed reaction is glucuronate acceptor + UDP-alpha-D-glucuronate = acceptor beta-D-glucuronoside + UDP + H(+). Functionally, UDPGT is of major importance in the conjugation and subsequent elimination of potentially toxic xenobiotics and endogenous compounds. Acts on small phenolic agents such as 2-beta-naphthol and 4-methylumbelliferone as well as bulky phenolic compounds like 2-hydroxy- and 4-hydroxybiphenyl. In contrast to 2B13 it is active toward 4-hydroxyesterone. This is UDP-glucuronosyltransferase 2B16 (UGT2B16) from Oryctolagus cuniculus (Rabbit).